A 630-amino-acid polypeptide reads, in one-letter code: MSVETYKFDAEVGKVLHLVIHTLYTNKKIFLRELISNASDACDKLRYLSQSNAELLQGESDFKITVSMDKEKRYIILQDNGIGMNKEDLTQNLGTIASSGTQKFLEQLGNDAKKDNMLIGQFGVGFYSSYMVADEVKVISKKAGEAQAYQWSSKGEGEYYIEDCEADFIRGTKITLHIKPEYDNYLDHFQIKDIIKTYSDHISVPIYYVGVDGKEQQVNSSSALWTRSKSDITDEQYEEFYRNIAYAIDKPWVTIHNKSEGVIEFTNLLFIPSSKTFDLFHPDRKSRVKLYIKKVFITDENVALIPKYMRFLRGVVDSEDLSLNISRETLQHSPLIDKIQASITKRVITELEKQKTKDQGEYETFWNNFGAVLKEGLCEGTADVDKLLKICLFRSALQDKFISLDEYIANLKSEQKNIYYITGDDLEALKSSPQIEGLLSRNIDVLLLTDDVDKFWVMVTRKYNDYVLKSVTSANIEIDNCDTKTAKSSDTNNDGKDDTSSSDDQNCEQLIKYFKEVLGDKVKSVEVSKKLTRSPVCLTVPEGSMDIRTERFLIEQKQLSSHSSKILEINPNHTIIKKINENIKLNQNLDVNKQLVMTLLDQSYLIEGQPIPDLQDYCNRINFFIEKSVN.

The a; substrate-binding stretch occupies residues 1–327; that stretch reads MSVETYKFDA…SEDLSLNISR (327 aa). Positions 328 to 551 are b; it reads ETLQHSPLID…EGSMDIRTER (224 aa). A compositionally biased stretch (basic and acidic residues) spans 483 to 499; it reads TKTAKSSDTNNDGKDDT. The interval 483–504 is disordered; that stretch reads TKTAKSSDTNNDGKDDTSSSDD. Residues 552–630 form a c region; sequence FLIEQKQLSS…INFFIEKSVN (79 aa).

The protein belongs to the heat shock protein 90 family. As to quaternary structure, homodimer.

It localises to the cytoplasm. Its function is as follows. Molecular chaperone. Has ATPase activity. In Orientia tsutsugamushi (strain Boryong) (Rickettsia tsutsugamushi), this protein is Chaperone protein HtpG.